The following is a 939-amino-acid chain: Probable importin ECU10_0620 (939 aa).

The Importin N-terminal domain occupies 23-90; sequence AEAMLMDLEK…VENILDLFLY (68 aa).

This sequence belongs to the importin beta family.

The protein localises to the nucleus. Its subcellular location is the cytoplasm. In terms of biological role, active in protein import into the nucleus. The chain is Probable importin ECU10_0620 from Encephalitozoon cuniculi (strain GB-M1) (Microsporidian parasite).